The following is a 105-amino-acid chain: MDKFYNYNSSLHQVLLNLKVKPNSKQNLISNFVIINNIPYLKLSIKATPEKGKANEEIINYLAKAWKLSRSNIEIIKGHTHSVKTILIKNINEDYLNFIINSYIR.

It belongs to the UPF0235 family.

In Rickettsia akari (strain Hartford), this protein is UPF0235 protein A1C_06510.